A 949-amino-acid polypeptide reads, in one-letter code: Pyruvate, phosphate dikinase, chloroplastic (949 aa).

A chloroplast-targeting transit peptide spans 1–74 (MASAFKGILI…VMAPASDPTS (74 aa)). Threonine 530 carries the post-translational modification Phosphothreonine; by PDRP1. Histidine 532 acts as the Tele-phosphohistidine intermediate in catalysis. Residues arginine 638, arginine 695, glutamate 824, glycine 845, threonine 846, asparagine 847, and aspartate 848 each coordinate substrate. Residue glutamate 824 coordinates Mg(2+). Aspartate 848 is a binding site for Mg(2+). The active-site Proton donor is cysteine 910.

The protein belongs to the PEP-utilizing enzyme family. As to quaternary structure, homodimer. The cofactor is Mg(2+). In terms of processing, phosphorylation of Thr-530 in the dark inactivates the enzyme. Dephosphorylation upon light stimulation reactivates the enzyme.

The protein resides in the plastid. It is found in the chloroplast. It carries out the reaction pyruvate + phosphate + ATP = phosphoenolpyruvate + AMP + diphosphate + H(+). Activated by light-induced dephosphorylation. Inhibited by dark-induced phosphorylation. Both reactions are catalyzed by PDRP1. Formation of phosphoenolpyruvate, which is the primary acceptor of CO(2) in C4 and some Crassulacean acid metabolism plants. In Mesembryanthemum crystallinum (Common ice plant), this protein is Pyruvate, phosphate dikinase, chloroplastic (PPD).